Here is a 279-residue protein sequence, read N- to C-terminus: Glutamate racemase (279 aa).

Residues Asp13–Ser14 and Tyr45–Gly46 contribute to the substrate site. Cys76 serves as the catalytic Proton donor/acceptor. A substrate-binding site is contributed by Asn77–Thr78. The Proton donor/acceptor role is filled by Cys185. Thr186–His187 is a substrate binding site.

Belongs to the aspartate/glutamate racemases family.

The catalysed reaction is L-glutamate = D-glutamate. The protein operates within cell wall biogenesis; peptidoglycan biosynthesis. Functionally, provides the (R)-glutamate required for cell wall biosynthesis. In Synechocystis sp. (strain ATCC 27184 / PCC 6803 / Kazusa), this protein is Glutamate racemase.